Consider the following 366-residue polypeptide: GTPase Obg (366 aa).

The Obg domain occupies 1-159 (MKFLDEAKVY…KTIWLRLKLI (159 aa)). One can recognise an OBG-type G domain in the interval 160–327 (ADAGLVGLPN…VLRALRDVIV (168 aa)). GTP-binding positions include 166–173 (GLPNAGKS), 191–195 (FTTLH), 212–215 (DIPG), 279–282 (SQID), and 308–310 (SAI). The Mg(2+) site is built by Ser-173 and Thr-193. Residues 333 to 366 (DDETISQRPKKHRHKLEDRPQHENGPEESEEGEE) form a disordered region. A compositionally biased stretch (basic and acidic residues) spans 347 to 357 (KLEDRPQHENG).

The protein belongs to the TRAFAC class OBG-HflX-like GTPase superfamily. OBG GTPase family. As to quaternary structure, monomer. Requires Mg(2+) as cofactor.

The protein resides in the cytoplasm. Its function is as follows. An essential GTPase which binds GTP, GDP and possibly (p)ppGpp with moderate affinity, with high nucleotide exchange rates and a fairly low GTP hydrolysis rate. Plays a role in control of the cell cycle, stress response, ribosome biogenesis and in those bacteria that undergo differentiation, in morphogenesis control. The polypeptide is GTPase Obg (Allorhizobium ampelinum (strain ATCC BAA-846 / DSM 112012 / S4) (Agrobacterium vitis (strain S4))).